The following is a 619-amino-acid chain: 1-deoxy-D-xylulose-5-phosphate synthase (619 aa).

Residues H74 and 115-117 (GHS) contribute to the thiamine diphosphate site. A Mg(2+)-binding site is contributed by D146. Thiamine diphosphate is bound by residues 147–148 (GA), N175, and Y285. Residue N175 participates in Mg(2+) binding. The interval 289–310 (EKSPSKYHGIPPSNDKKEEPNK) is disordered. E365 contributes to the thiamine diphosphate binding site.

This sequence belongs to the transketolase family. DXPS subfamily. As to quaternary structure, homodimer. It depends on Mg(2+) as a cofactor. Requires thiamine diphosphate as cofactor.

The enzyme catalyses D-glyceraldehyde 3-phosphate + pyruvate + H(+) = 1-deoxy-D-xylulose 5-phosphate + CO2. The protein operates within metabolic intermediate biosynthesis; 1-deoxy-D-xylulose 5-phosphate biosynthesis; 1-deoxy-D-xylulose 5-phosphate from D-glyceraldehyde 3-phosphate and pyruvate: step 1/1. In terms of biological role, catalyzes the acyloin condensation reaction between C atoms 2 and 3 of pyruvate and glyceraldehyde 3-phosphate to yield 1-deoxy-D-xylulose-5-phosphate (DXP). The protein is 1-deoxy-D-xylulose-5-phosphate synthase of Clostridium botulinum (strain Alaska E43 / Type E3).